The primary structure comprises 365 residues: Flagellar P-ring protein (365 aa).

The first 21 residues, M1 to A21, serve as a signal peptide directing secretion.

Belongs to the FlgI family. The basal body constitutes a major portion of the flagellar organelle and consists of four rings (L,P,S, and M) mounted on a central rod.

Its subcellular location is the periplasm. The protein resides in the bacterial flagellum basal body. In terms of biological role, assembles around the rod to form the L-ring and probably protects the motor/basal body from shearing forces during rotation. In Geobacter metallireducens (strain ATCC 53774 / DSM 7210 / GS-15), this protein is Flagellar P-ring protein.